Reading from the N-terminus, the 138-residue chain is MAREFSRTDRVGQQIHKEIASILQNEFKNRDPRLGMVTVSAVEVSRDLAYTKIYVTFFENDEEVMDNYLSILEENKGYIRTLLANRMRMRAVPAIKFVRDGSLSEGIRISNLVDETLNKDKERARNAGRSLDEDEQED.

This sequence belongs to the RbfA family. As to quaternary structure, monomer. Binds 30S ribosomal subunits, but not 50S ribosomal subunits or 70S ribosomes.

The protein resides in the cytoplasm. Functionally, one of several proteins that assist in the late maturation steps of the functional core of the 30S ribosomal subunit. Associates with free 30S ribosomal subunits (but not with 30S subunits that are part of 70S ribosomes or polysomes). Required for efficient processing of 16S rRNA. May interact with the 5'-terminal helix region of 16S rRNA. This chain is Ribosome-binding factor A, found in Pseudoalteromonas atlantica (strain T6c / ATCC BAA-1087).